The chain runs to 120 residues: UPF0231 protein YacL (120 aa).

The protein belongs to the UPF0231 family.

This is UPF0231 protein YacL from Escherichia coli (strain SMS-3-5 / SECEC).